The sequence spans 229 residues: MTTAAVFGSTGAVGGQILATLLASDAFSSVKTVSRRLPNAQSPKLQTLEEGDITKWGGLIASLSPKPSIVFNAVGTTRAAAGGIANQWKIDHDLCIENAKAAKEAGVKTYVFISSGGTRGFFSRYVPYSKMKIGVEDAIKELDFEQAIILRPGLILQREKPKAALLENIVQNLNKLGQGVQDMIGQDQTVIGRAAVAAARMAEEGKAPSKYWVLEQADIVRLGRDEWKQ.

A mitochondrion-targeting transit peptide spans 1–45 (MTTAAVFGSTGAVGGQILATLLASDAFSSVKTVSRRLPNAQSPKL).

Belongs to the FMP52 family.

It is found in the mitochondrion outer membrane. In Aspergillus oryzae (strain ATCC 42149 / RIB 40) (Yellow koji mold), this protein is Protein fmp52-2, mitochondrial (fmp522).